The primary structure comprises 270 residues: Methylthioribulose-1-phosphate dehydratase (270 aa).

Cysteine 122 lines the substrate pocket. Zn(2+) is bound by residues histidine 140 and histidine 142. The active-site Proton donor/acceptor is glutamate 165. Histidine 230 is a binding site for Zn(2+).

This sequence belongs to the aldolase class II family. MtnB subfamily. Zn(2+) serves as cofactor.

It is found in the cytoplasm. It catalyses the reaction 5-(methylsulfanyl)-D-ribulose 1-phosphate = 5-methylsulfanyl-2,3-dioxopentyl phosphate + H2O. Its pathway is amino-acid biosynthesis; L-methionine biosynthesis via salvage pathway; L-methionine from S-methyl-5-thio-alpha-D-ribose 1-phosphate: step 2/6. Catalyzes the dehydration of methylthioribulose-1-phosphate (MTRu-1-P) into 2,3-diketo-5-methylthiopentyl-1-phosphate (DK-MTP-1-P). This Candida albicans (strain WO-1) (Yeast) protein is Methylthioribulose-1-phosphate dehydratase.